We begin with the raw amino-acid sequence, 396 residues long: Probable mannan endo-1,4-beta-mannosidase A-2 (396 aa).

The signal sequence occupies residues 1–21; the sequence is MKVPRLLLALGGLASIHIASA. Tryptophan 99 is a binding site for substrate. N-linked (GlcNAc...) asparagine glycosylation is present at asparagine 120. Position 212 (asparagine 212) interacts with substrate. Catalysis depends on glutamate 213, which acts as the Proton donor. Asparagine 270 carries an N-linked (GlcNAc...) asparagine glycan. Position 288 (tyrosine 288) interacts with substrate. Catalysis depends on glutamate 321, which acts as the Nucleophile. Substrate is bound at residue tryptophan 351.

It belongs to the glycosyl hydrolase 5 (cellulase A) family.

It is found in the secreted. It carries out the reaction Random hydrolysis of (1-&gt;4)-beta-D-mannosidic linkages in mannans, galactomannans and glucomannans.. Endo-1,4-mannanase, a crucial enzyme for depolymerization of seed galactomannans and wood galactoglucomannans. This is Probable mannan endo-1,4-beta-mannosidase A-2 (manA-2) from Aspergillus terreus (strain NIH 2624 / FGSC A1156).